Consider the following 187-residue polypeptide: UPF0301 protein YPTS_3341 (187 aa).

Belongs to the UPF0301 (AlgH) family.

The protein is UPF0301 protein YPTS_3341 of Yersinia pseudotuberculosis serotype IB (strain PB1/+).